We begin with the raw amino-acid sequence, 245 residues long: Endo-chitosanase (245 aa).

The signal sequence occupies residues 1–17 (MHFAGIVAIALATGATA).

The protein belongs to the glycosyl hydrolase 75 family.

The protein localises to the secreted. It carries out the reaction Endohydrolysis of beta-(1-&gt;4)-linkages between D-glucosamine residues in a partly acetylated chitosan.. Its function is as follows. Chitosanase catalyzing the endo-type cleavage of chitosan, the deacylated form of chitin. Chitosanase may be crucial in the degradation of the deacetylated portion of chitin in the fungal cell wall. Chitoolisaccharides produced by the hydrolysis of partially N-acetylated chitosan are known to have many biological activities, including antibacterial activity, immune-enhancing effects, and elicitor activity. The polypeptide is Endo-chitosanase (csn) (Aspergillus oryzae (strain ATCC 42149 / RIB 40) (Yellow koji mold)).